The chain runs to 261 residues: MSLPASFDLTPEDAKLLLAANVHLGSKNVQVHNKPYVYKTRPDGVNVINIGKTWEKIVLAARIIAAVPNPSDVAVCSSRTFGQRAVLKFAAHTGATPIAGRFTPGNFTNYITRSFKEPRLVVVTDPRTDAQAIKESSYVNIPVIALTDMDSPSEYVDVAIPCNNKGKHSIGLIWWLIAREVLRLRGIIPDRTTEWSVMPDLYFYRDPEEIEQNAAEEAKTTEDVEEAAPVDADEWTGETEEVDWAESGATPAVEDAAASNW.

Residue Ser-2 is modified to N-acetylserine. The interval 215–261 is disordered; it reads AEEAKTTEDVEEAAPVDADEWTGETEEVDWAESGATPAVEDAAASNW. The segment covering 223–244 has biased composition (acidic residues); that stretch reads DVEEAAPVDADEWTGETEEVDW.

Belongs to the universal ribosomal protein uS2 family. As to quaternary structure, component of the small ribosomal subunit. Mature ribosomes consist of a small (40S) and a large (60S) subunit. The 40S subunit contains about 33 different proteins and 1 molecule of RNA (18S). The 60S subunit contains about 49 different proteins and 3 molecules of RNA (25S, 5.8S and 5S). Interacts with RPS21.

Its subcellular location is the cytoplasm. Required for the assembly and/or stability of the 40S ribosomal subunit. Required for the processing of the 20S rRNA-precursor to mature 18S rRNA in a late step of the maturation of 40S ribosomal subunits. The chain is Small ribosomal subunit protein uS2 from Scheffersomyces stipitis (strain ATCC 58785 / CBS 6054 / NBRC 10063 / NRRL Y-11545) (Yeast).